The chain runs to 1342 residues: DNA-directed RNA polymerase subunit beta (1342 aa).

Belongs to the RNA polymerase beta chain family. The RNAP catalytic core consists of 2 alpha, 1 beta, 1 beta' and 1 omega subunit. When a sigma factor is associated with the core the holoenzyme is formed, which can initiate transcription.

It catalyses the reaction RNA(n) + a ribonucleoside 5'-triphosphate = RNA(n+1) + diphosphate. Its function is as follows. DNA-dependent RNA polymerase catalyzes the transcription of DNA into RNA using the four ribonucleoside triphosphates as substrates. This Vibrio campbellii (strain ATCC BAA-1116) protein is DNA-directed RNA polymerase subunit beta.